We begin with the raw amino-acid sequence, 44 residues long: Cytochrome b559 subunit beta (44 aa).

Residues Trp19–Ala35 form a helical membrane-spanning segment. Position 23 (His23) interacts with heme.

This sequence belongs to the PsbE/PsbF family. Heterodimer of an alpha subunit and a beta subunit. PSII is composed of 1 copy each of membrane proteins PsbA, PsbB, PsbC, PsbD, PsbE, PsbF, PsbH, PsbI, PsbJ, PsbK, PsbL, PsbM, PsbT, PsbX, PsbY, PsbZ, Psb30/Ycf12, peripheral proteins PsbO, CyanoQ (PsbQ), PsbU, PsbV and a large number of cofactors. It forms dimeric complexes. It depends on heme b as a cofactor.

The protein localises to the cellular thylakoid membrane. Its function is as follows. This b-type cytochrome is tightly associated with the reaction center of photosystem II (PSII). PSII is a light-driven water:plastoquinone oxidoreductase that uses light energy to abstract electrons from H(2)O, generating O(2) and a proton gradient subsequently used for ATP formation. It consists of a core antenna complex that captures photons, and an electron transfer chain that converts photonic excitation into a charge separation. The protein is Cytochrome b559 subunit beta of Crocosphaera subtropica (strain ATCC 51142 / BH68) (Cyanothece sp. (strain ATCC 51142)).